The chain runs to 147 residues: MKAVLILGLLLLSVTVQGKKFEKCELARTLRRYGLDGYKGVSLANWMCLTYGESRYNTRVTNYNPGSKSTDYGIFQINSKWWCNDGKTPKAVNGCGVSCSAMLKDDITQAVACAKTIVSRQGITAWVAWKNKCRNRDVSSYIRGCKL.

The first 18 residues, 1–18 (MKAVLILGLLLLSVTVQG), serve as a signal peptide directing secretion. In terms of domain architecture, C-type lysozyme spans 19 to 147 (KKFEKCELAR…VSSYIRGCKL (129 aa)). Cystine bridges form between C24-C145, C48-C133, C83-C99, and C95-C113. Residues E53 and D71 contribute to the active site.

This sequence belongs to the glycosyl hydrolase 22 family.

The enzyme catalyses Hydrolysis of (1-&gt;4)-beta-linkages between N-acetylmuramic acid and N-acetyl-D-glucosamine residues in a peptidoglycan and between N-acetyl-D-glucosamine residues in chitodextrins.. Functionally, lysozymes have primarily a bacteriolytic function; those in tissues and body fluids are associated with the monocyte-macrophage system and enhance the activity of immunoagents. The polypeptide is Lysozyme C, intestinal isozyme (Bos taurus (Bovine)).